Consider the following 224-residue polypeptide: Glutathione S-transferase U28 (224 aa).

Residues 6–85 (SKVVVLDFWA…YIDETWTDAA (80 aa)) enclose the GST N-terminal domain. Glutathione contacts are provided by residues 16 to 17 (SP), 42 to 43 (NK), 56 to 57 (KV), and 69 to 70 (ES). The GST C-terminal domain occupies 91-217 (DPQSRATARF…EKVYQQVLKL (127 aa)). T154 bears the Phosphothreonine mark.

It belongs to the GST superfamily. Tau family.

The protein resides in the cytoplasm. The protein localises to the cytosol. The catalysed reaction is RX + glutathione = an S-substituted glutathione + a halide anion + H(+). Functionally, may be involved in the conjugation of reduced glutathione to a wide number of exogenous and endogenous hydrophobic electrophiles and have a detoxification role against certain herbicides. This is Glutathione S-transferase U28 (GSTU28) from Arabidopsis thaliana (Mouse-ear cress).